A 447-amino-acid chain; its full sequence is MFILSSSSSLPSPLSLSSSRVSLPPPSSSSLNLLPLSPHFQPPNLACSCSVASRSTAELLHDFKHSAHTAASADEARNHLPHSRAFLDVRSEQELLSYIRREAEAGKLPSNVAAGMEELYQNYKNAVLKSGNPKADEIVLSNMTVALDRILLDVEEPFVFSPHHKAVREPFDYYTFGQNYVRPLIDFGNSFVGNPFLFKDIEEKLHQGHNVVLISNHQTEADPAIISLLLEKTSPYIAENMIYVAGDRVIVDPLCKPFSIGRNLICVYSKKHMFDIPELAETKRKANTRSLKEMALLLRGGSQLIWIAPSGGRDRLDPSSGEWLPAPFDASSMDNMRRLIQHSGVPGHLCPLALLCYDIMPPPSKVEIEIGEKRVISFNGVGLSLAPAISFEAIAATHRNPDEAREAYSKALFDSVSMQYNVLKAAIYGRQALRASTADVSLSQPWI.

Residues 1 to 21 form a disordered region; that stretch reads MFILSSSSSLPSPLSLSSSRV. A chloroplast-targeting transit peptide spans 1 to 48; it reads MFILSSSSSLPSPLSLSSSRVSLPPPSSSSLNLLPLSPHFQPPNLACS. Positions 217–222 match the HXXXXD motif motif; that stretch reads HQTEAD.

Belongs to the GPAT/DAPAT family.

The protein localises to the plastid. The protein resides in the chloroplast stroma. The enzyme catalyses a fatty acyl-[ACP] + sn-glycerol 3-phosphate = a 1-acyl-sn-glycero-3-phosphate + holo-[ACP]. It carries out the reaction sn-glycerol 3-phosphate + an acyl-CoA = a 1-acyl-sn-glycero-3-phosphate + CoA. It participates in phospholipid metabolism; CDP-diacylglycerol biosynthesis; CDP-diacylglycerol from sn-glycerol 3-phosphate: step 1/3. Esterifies the acyl-group from acyl-acyl carrier proteins (acyl-ACPs) to the sn-1 position of glycerol-3-phosphate. The physiological acyl donors in chloroplasts are acyl-ACPs, but acyl-CoAs are used as artificial donor for in vitro reactions. The enzyme from chilling-resistant plants discriminates against non-fluid palmitic acid and selects oleic acid whereas the enzyme from sensitive plants accepts both fatty acids. Squash is chilling-sensitive. Preferably utilizes oleoyl groups (18:1-ACP) and has lower affinity to palmitoyl (16:0-ACP) and stearoyl groups (18:0-ACP). The protein is Glycerol-3-phosphate acyltransferase ATS11, chloroplastic of Cucurbita moschata (Winter crookneck squash).